The primary structure comprises 111 residues: C-type lectin lectoxin-Enh1 (111 aa).

An N-terminal signal peptide occupies residues 1 to 23 (MGQFTVVSLGLLAMFLSLSGAKG). Cysteines 26 and 37 form a disulfide. Positions 33–108 (RNGVCNKLFP…CASLHPFICQ (76 aa)) constitute a C-type lectin domain. Residues 72–74 (EPN) carry the Mannose-binding motif. Ca(2+) contacts are provided by Glu80, Asn95, and Asp96. A disulfide bridge connects residues Cys82 and Cys99.

The protein belongs to the true venom lectin family. Expressed by the venom gland.

It is found in the secreted. Functionally, mannose-binding lectin which recognizes specific carbohydrate structures and agglutinates a variety of animal cells by binding to cell-surface glycoproteins and glycolipids. May be a calcium-dependent lectin. The polypeptide is C-type lectin lectoxin-Enh1 (Pseudoferania polylepis (Macleay's water snake)).